The chain runs to 186 residues: Elongation factor P (186 aa).

The protein belongs to the elongation factor P family.

Its subcellular location is the cytoplasm. It participates in protein biosynthesis; polypeptide chain elongation. In terms of biological role, involved in peptide bond synthesis. Stimulates efficient translation and peptide-bond synthesis on native or reconstituted 70S ribosomes in vitro. Probably functions indirectly by altering the affinity of the ribosome for aminoacyl-tRNA, thus increasing their reactivity as acceptors for peptidyl transferase. This is Elongation factor P from Prochlorococcus marinus (strain MIT 9515).